Here is a 320-residue protein sequence, read N- to C-terminus: Aspartate carbamoyltransferase catalytic subunit (320 aa).

Positions 70 and 71 each coordinate carbamoyl phosphate. Lys-98 provides a ligand contact to L-aspartate. The carbamoyl phosphate site is built by Arg-120, His-149, and Gln-152. Arg-182 and Arg-237 together coordinate L-aspartate. Residues Gly-278 and Pro-279 each coordinate carbamoyl phosphate.

It belongs to the aspartate/ornithine carbamoyltransferase superfamily. ATCase family. In terms of assembly, heterododecamer (2C3:3R2) of six catalytic PyrB chains organized as two trimers (C3), and six regulatory PyrI chains organized as three dimers (R2).

It carries out the reaction carbamoyl phosphate + L-aspartate = N-carbamoyl-L-aspartate + phosphate + H(+). Its pathway is pyrimidine metabolism; UMP biosynthesis via de novo pathway; (S)-dihydroorotate from bicarbonate: step 2/3. Its function is as follows. Catalyzes the condensation of carbamoyl phosphate and aspartate to form carbamoyl aspartate and inorganic phosphate, the committed step in the de novo pyrimidine nucleotide biosynthesis pathway. The protein is Aspartate carbamoyltransferase catalytic subunit of Vesicomyosocius okutanii subsp. Calyptogena okutanii (strain HA).